Consider the following 222-residue polypeptide: Probable elongation factor 1-beta (222 aa).

The tract at residues 90 to 111 (KPAADDDDDVDLFGSDDEEDEE) is disordered. The span at 94–111 (DDDDDVDLFGSDDEEDEE) shows a compositional bias: acidic residues. Residue S104 is modified to Phosphoserine.

This sequence belongs to the EF-1-beta/EF-1-delta family. As to quaternary structure, EF-1 is composed of 4 subunits: alpha, beta, beta' and gamma. Post-translationally, phosphorylation affects the GDP/GTP exchange rate.

Functionally, EF-1-beta and EF-1-delta stimulate the exchange of GDP bound to EF-1-alpha to GTP. In Drosophila melanogaster (Fruit fly), this protein is Probable elongation factor 1-beta.